The primary structure comprises 712 residues: Transferrin-binding protein B (712 aa).

Positions 1–20 (MNNPLVNQAAMVLPVFLLSA) are cleaved as a signal peptide. The N-palmitoyl cysteine moiety is linked to residue Cys21. A lipid anchor (S-diacylglycerol cysteine) is attached at Cys21. Residues 59–196 (GGYGFAMRLK…YHGKEPSRQL (138 aa)) are N-terminal handle domain. Disordered stretches follow at residues 78–104 (EDEV…PKRQ), 123–144 (PYLK…QPKN), 223–256 (IIQP…LTDG), 309–338 (NGKA…SLSG), 364–398 (SAKT…SSEN), 442–495 (ASES…GDTN), and 689–712 (NATN…QPVR). Basic and acidic residues predominate over residues 95-104 (DEPKELPKRQ). The span at 128-144 (SNHQNGNTGNGINQPKN) shows a compositional bias: polar residues. Residues 197–367 (PASGKITYKG…KVAVVGSAKT (171 aa)) form an N-terminal beta barrel domain region. Composition is skewed to low complexity over residues 372 to 398 (ANGN…SSEN) and 446 to 459 (GNNQ…GGTA). A C-terminal handle domain region spans residues 389 to 555 (NGAAGTSSEN…SMFLQGERTD (167 aa)). The segment covering 462 to 475 (RKFDHTPESDKKDA) has biased composition (basic and acidic residues). 2 stretches are compositionally biased toward polar residues: residues 477–495 (AGTQ…GDTN) and 689–700 (NATNASGNSSAT). The segment at 556 to 712 (EKEIPSEQNI…FGAKRQQPVR (157 aa)) is C-terminal beta barrel domain.

This sequence belongs to the TbpB family. Isotype II subfamily. In terms of assembly, binds only human holo-transferrin (TF), via the TF C-terminus. Forms a large complex with TF and TbpA. Interacts via its C-terminal domain with Slam1.

The protein localises to the cell outer membrane. The protein resides in the cell surface. Neisseria acquires iron by extracting it from serum transferrin (TF) in its human host. Acts as a TF receptor and is required for TF utilization. Involved in the initial capture of TF. Helps select only those TF molecules that can be used as an iron source and concentrates them on the cell surface, maintaining the iron-loaded status of the TF C-terminal lobe until its delivery to TbpA. This chain is Transferrin-binding protein B, found in Neisseria meningitidis serogroup B (strain ATCC BAA-335 / MC58).